The primary structure comprises 469 residues: Tetratricopeptide repeat protein 38 (469 aa).

An N-acetylalanine modification is found at Ala2. Ser5 carries the phosphoserine modification. TPR repeat units lie at residues 108-141, 180-213, and 252-285; these read REQLHVSAVETFAKGNFPKACELWEQILQDHPTD, SYVKGIYSFGLMETNFYDQAEKLAKEALSINPTD, and CHNYWHWALYLIEKGEYEAALTIYDTHILPSLQA.

The protein belongs to the TTC38 family.

This is Tetratricopeptide repeat protein 38 (TTC38) from Pongo abelii (Sumatran orangutan).